The chain runs to 1567 residues: ABC multidrug transporter MDR1 (1567 aa).

A compositionally biased stretch (pro residues) spans 1–11 (MASQPPQPPSG). Residues 1 to 37 (MASQPPQPPSGQPDTQYEEYQSEVITETTNRPTPAAD) form a disordered region. The span at 22–32 (SEVITETTNRP) shows a compositional bias: polar residues. N-linked (GlcNAc...) asparagine glycans are attached at residues Asn149, Asn157, and Asn356. The ABC transporter 1 domain occupies 167–432 (VQYQDTFLSP…FEEMGWYCPP (266 aa)). 6 consecutive transmembrane segments (helical) span residues 543–563 (STIA…SLFF), 571–591 (GFFA…LMSI), 636–656 (IPIK…LGGL), 661–681 (AKFF…SAIF), 691–711 (IPQA…YTGF), and 798–818 (LGIL…VSEL). Asn819, Asn895, and Asn912 each carry an N-linked (GlcNAc...) asparagine glycan. The 244-residue stretch at 891 to 1134 (FTWRNVTYDI…LLNYFETHGA (244 aa)) folds into the ABC transporter 2 domain. 927-934 (GVSGAGKT) is a binding site for ATP. The segment at 1172–1202 (ESRHVQQELDRIQSETSKRNEGHGQSAEKEP) is disordered. The chain crosses the membrane as a helical span at residues 1231–1251 (IWGKLLLGLTSALFIGFSFFL). The N-linked (GlcNAc...) asparagine glycan is linked to Asn1253. The next 5 membrane-spanning stretches (helical) occupy residues 1257 to 1277 (AGLQ…SSLV), 1305 to 1325 (VFLL…GIIA), 1345 to 1365 (ILLL…QMII), 1372 to 1392 (ETAG…NGVL), and 1498 to 1518 (GIGW…YYLI).

This sequence belongs to the ABC transporter superfamily. ABCG family. PDR (TC 3.A.1.205) subfamily.

It is found in the cell membrane. The enzyme catalyses voriconazole(in) + ATP + H2O = voriconazole(out) + ADP + phosphate + H(+). It carries out the reaction fluconazole(in) + ATP + H2O = fluconazole(out) + ADP + phosphate + H(+). It catalyses the reaction (R)-miconazole(in) + ATP + H2O = (R)-miconazole(out) + ADP + phosphate + H(+). The catalysed reaction is (S)-miconazole(in) + ATP + H2O = (S)-miconazole(out) + ADP + phosphate + H(+). Its function is as follows. Pleiotropic ABC efflux transporter that may be involved in the modulation susceptibility to a wide range of unrelated cytotoxic compounds. The chain is ABC multidrug transporter MDR1 from Trichophyton equinum (strain ATCC MYA-4606 / CBS 127.97) (Horse ringworm fungus).